Here is a 90-residue protein sequence, read N- to C-terminus: Probable Fe(2+)-trafficking protein (90 aa).

This sequence belongs to the Fe(2+)-trafficking protein family.

Could be a mediator in iron transactions between iron acquisition and iron-requiring processes, such as synthesis and/or repair of Fe-S clusters in biosynthetic enzymes. The chain is Probable Fe(2+)-trafficking protein from Bordetella avium (strain 197N).